Reading from the N-terminus, the 90-residue chain is MSRTVFCARLKKEGEGLDFQLYPGELGKRIFDNISKEAWAQWQHKQTMLINEKKLNMMDPEHRKLLETEMVNFLFEGKDVHIEGYTPPSE.

The protein belongs to the Fe(2+)-trafficking protein family.

Functionally, could be a mediator in iron transactions between iron acquisition and iron-requiring processes, such as synthesis and/or repair of Fe-S clusters in biosynthetic enzymes. The protein is Probable Fe(2+)-trafficking protein of Vibrio parahaemolyticus serotype O3:K6 (strain RIMD 2210633).